The following is a 389-amino-acid chain: MPVTKMQDLDLGGKTVVIREDLNVPMKDGIITNDKRIRAALPTIQLALEKGAGVIVLSHLGRPTEGQYDQQFSLAPVADRLAQLLGQPVTLAKSLDEAKTAPGQVTLLENVRFLPGEKKNDPELAAKLAGLGDVYVMDAFGSAHRAHASTEGAVRTAAVACAGPLLQAELEAFDKVLDNPARPVVAIVGGAKVSTKLTLLENLLEKVDVLIVGGGIANTFLAAAGYMVGKSLYEEDLLPEAQKIMALAKTLNKELPLPVDVITAEELAPRQQTMLHAVGDVPGDQMILDIGPETLTLYEKFLSKAATVVWNGPVGAFEIEPFGDGTKALAEYLSDSKAFVVVGGGDSVAAVEKYGLADRMGYISTGGGASLELLEGKKLPSVAALEDRA.

Residues 21–23, R36, 59–62, R112, and R145 each bind substrate; these read DLN and HLGR. ATP-binding positions include K196, E318, and 344 to 347; that span reads GGDS.

The protein belongs to the phosphoglycerate kinase family. As to quaternary structure, monomer.

Its subcellular location is the cytoplasm. It catalyses the reaction (2R)-3-phosphoglycerate + ATP = (2R)-3-phospho-glyceroyl phosphate + ADP. The protein operates within carbohydrate degradation; glycolysis; pyruvate from D-glyceraldehyde 3-phosphate: step 2/5. This chain is Phosphoglycerate kinase, found in Desulfovibrio desulfuricans (strain ATCC 27774 / DSM 6949 / MB).